Here is a 295-residue protein sequence, read N- to C-terminus: Ribosomal protein L11 methyltransferase (295 aa).

T150, G171, D193, and N232 together coordinate S-adenosyl-L-methionine.

It belongs to the methyltransferase superfamily. PrmA family.

It is found in the cytoplasm. The enzyme catalyses L-lysyl-[protein] + 3 S-adenosyl-L-methionine = N(6),N(6),N(6)-trimethyl-L-lysyl-[protein] + 3 S-adenosyl-L-homocysteine + 3 H(+). In terms of biological role, methylates ribosomal protein L11. This is Ribosomal protein L11 methyltransferase from Neisseria meningitidis serogroup A / serotype 4A (strain DSM 15465 / Z2491).